Here is a 425-residue protein sequence, read N- to C-terminus: Transmembrane protein 184A (425 aa).

Transmembrane regions (helical) follow at residues 51-71, 96-116, 133-153, 189-209, 226-246, 261-281, and 303-323; these read LFLTSALARGVSGVFVWTALL, LLFIVPIYAFDSWLSLLLLGG, FVIYSFLTLCFQYLGGESAIM, TLQFCIVKPVMALITIILQAF, VTLVYNASVSLALYALFLFYF, FLTIKAIIFLSFWQGMLLAIL, and LAAGYQNFLICVEMLFASLAL. A disordered region spans residues 375 to 425; that stretch reads QYTQQSTHEAPGPGQGGHPAPSTHPGPASGSGGGKKSRNIEKRMLIPSEDL. Residues 392–402 are compositionally biased toward low complexity; that stretch reads HPAPSTHPGPA.

The protein belongs to the TMEM184 family. As to expression, expressed in testis, pancreas, parotid salivary gland and mammary gland (at protein level).

It is found in the cell membrane. The protein localises to the cytoplasm. It localises to the perinuclear region. The protein resides in the cytoplasmic vesicle membrane. Its subcellular location is the early endosome membrane. It is found in the endosome. The protein localises to the cytoplasmic vesicle. It localises to the secretory vesicle membrane. Functionally, acts as a heparin receptor in vascular cells. May be involved in vesicle transport in exocrine cells and Sertoli cells. This chain is Transmembrane protein 184A (Tmem184a), found in Mus musculus (Mouse).